The chain runs to 340 residues: Acidic endochitinase WIN6 (340 aa).

An N-terminal signal peptide occupies residues 1–22; it reads MSVWALFAFFSLFLSLSVRGSA. Residues 23–63 enclose the Chitin-binding type-1 domain; the sequence is EQCGRQAGDALCPGGLCCSSYGWCGTTVDYCGIGCQSQCDG. 4 disulfide bridges follow: Cys25–Cys40, Cys34–Cys46, Cys39–Cys53, and Cys57–Cys61. The spacer stretch occupies residues 64 to 85; sequence GGGGDGGDDGCDGGDDGGGDGD. The tract at residues 86-340 is chitinase; sequence DGYLSDIIPK…YGLSGLKDTM (255 aa). 3 disulfide bridges follow: Cys110–Cys172, Cys183–Cys191, and Cys290–Cys323. Catalysis depends on Glu154, which acts as the Proton donor.

The protein belongs to the glycosyl hydrolase 19 family. Chitinase class I subfamily.

It catalyses the reaction Random endo-hydrolysis of N-acetyl-beta-D-glucosaminide (1-&gt;4)-beta-linkages in chitin and chitodextrins.. Defense against chitin-containing fungal pathogens. The sequence is that of Acidic endochitinase WIN6 (WIN6) from Populus trichocarpa (Western balsam poplar).